Reading from the N-terminus, the 259-residue chain is Sugar fermentation stimulation protein homolog (259 aa).

Belongs to the SfsA family.

The protein is Sugar fermentation stimulation protein homolog of Chloroflexus aurantiacus (strain ATCC 29364 / DSM 637 / Y-400-fl).